Consider the following 389-residue polypeptide: Glutamate 5-kinase (389 aa).

Lys16 is an ATP binding site. Residues Ser56, Asp143, and Asn155 each contribute to the substrate site. Position 175 to 176 (175 to 176 (SD)) interacts with ATP. In terms of domain architecture, PUA spans 281-358 (AGELHVDDGA…AEIEAILGYA (78 aa)).

The protein belongs to the glutamate 5-kinase family.

The protein resides in the cytoplasm. The enzyme catalyses L-glutamate + ATP = L-glutamyl 5-phosphate + ADP. The protein operates within amino-acid biosynthesis; L-proline biosynthesis; L-glutamate 5-semialdehyde from L-glutamate: step 1/2. Catalyzes the transfer of a phosphate group to glutamate to form L-glutamate 5-phosphate. The protein is Glutamate 5-kinase of Rhizobium etli (strain CIAT 652).